A 298-amino-acid polypeptide reads, in one-letter code: NAD kinase (298 aa).

Asp-80 serves as the catalytic Proton acceptor. Residues 80 to 81, 154 to 155, Arg-182, Asp-184, 195 to 200, Ala-219, and Gln-253 contribute to the NAD(+) site; these read DG, ND, and TAYALS.

The protein belongs to the NAD kinase family. It depends on a divalent metal cation as a cofactor.

The protein resides in the cytoplasm. It carries out the reaction NAD(+) + ATP = ADP + NADP(+) + H(+). In terms of biological role, involved in the regulation of the intracellular balance of NAD and NADP, and is a key enzyme in the biosynthesis of NADP. Catalyzes specifically the phosphorylation on 2'-hydroxyl of the adenosine moiety of NAD to yield NADP. The sequence is that of NAD kinase from Delftia acidovorans (strain DSM 14801 / SPH-1).